Consider the following 431-residue polypeptide: Cortical fragment-lytic enzyme (431 aa).

2 LysM domains span residues 2–46 (QIYV…TIVI) and 51–95 (QFYD…RLYI). In terms of domain architecture, GH18 spans 103–431 (IESNAYLEPR…QFNVVKKTFR (329 aa)). Residues 148-149 (VA) and 174-177 (ENQA) contribute to the chitin site. Glu217 functions as the Proton donor in the catalytic mechanism. Residues Tyr218, 280-283 (MTYE), and Trp406 each bind chitin.

This sequence belongs to the glycosyl hydrolase 18 family. Chitinase class II subfamily.

The protein resides in the spore coat. Functionally, N-acetylglucosaminidase involved in cortex peptidoglycan degradation during germination. Cleaves only partially degraded spore peptidoglycans. Recognizes muramic acid delta-lactam residues specific to spore peptidoglycans. This Bacillus subtilis (strain 168) protein is Cortical fragment-lytic enzyme.